The chain runs to 350 residues: Dihydroorotate dehydrogenase (quinone) (350 aa).

FMN is bound by residues 67 to 71 and Gly91; that span reads AGFDK. Residue Lys71 coordinates substrate. Position 116–120 (116–120) interacts with substrate; sequence NRMGF. The FMN site is built by Asn144 and Asn177. Asn177 is a binding site for substrate. Ser180 acts as the Nucleophile in catalysis. Asn182 serves as a coordination point for substrate. Residues Lys213 and Thr241 each contribute to the FMN site. 242–243 is a substrate binding site; the sequence is NT. The tract at residues 249 to 268 is disordered; sequence ASLHSDAADEEGGLSGAPIT. Residues Gly264, Gly291, and 312–313 each bind FMN; that span reads YT.

The protein belongs to the dihydroorotate dehydrogenase family. Type 2 subfamily. In terms of assembly, monomer. It depends on FMN as a cofactor.

The protein localises to the cell membrane. It catalyses the reaction (S)-dihydroorotate + a quinone = orotate + a quinol. It participates in pyrimidine metabolism; UMP biosynthesis via de novo pathway; orotate from (S)-dihydroorotate (quinone route): step 1/1. In terms of biological role, catalyzes the conversion of dihydroorotate to orotate with quinone as electron acceptor. This is Dihydroorotate dehydrogenase (quinone) from Natronomonas pharaonis (strain ATCC 35678 / DSM 2160 / CIP 103997 / JCM 8858 / NBRC 14720 / NCIMB 2260 / Gabara) (Halobacterium pharaonis).